The following is a 439-amino-acid chain: tRNA modification GTPase MnmE (439 aa).

R24, E81, and K121 together coordinate (6S)-5-formyl-5,6,7,8-tetrahydrofolate. Residues 218 to 363 (GFKVVIAGAP…LRDLIGRVVK (146 aa)) form the TrmE-type G domain. K(+) is bound at residue N228. GTP contacts are provided by residues 228-233 (NAGKSS), 247-253 (TDIAGTT), and 272-275 (DTAG). S232 is a binding site for Mg(2+). The K(+) site is built by T247, I249, and T252. Residue T253 participates in Mg(2+) binding. (6S)-5-formyl-5,6,7,8-tetrahydrofolate is bound at residue K439.

Belongs to the TRAFAC class TrmE-Era-EngA-EngB-Septin-like GTPase superfamily. TrmE GTPase family. Homodimer. Heterotetramer of two MnmE and two MnmG subunits. It depends on K(+) as a cofactor.

Its subcellular location is the cytoplasm. In terms of biological role, exhibits a very high intrinsic GTPase hydrolysis rate. Involved in the addition of a carboxymethylaminomethyl (cmnm) group at the wobble position (U34) of certain tRNAs, forming tRNA-cmnm(5)s(2)U34. This Rhizobium etli (strain CIAT 652) protein is tRNA modification GTPase MnmE.